The primary structure comprises 80 residues: Metallothionein-like protein 2B (80 aa).

The protein belongs to the metallothionein superfamily. Type 15 family. Highly expressed in stems. Expressed in leaves and rachis.

Its function is as follows. Metallothioneins have a high content of cysteine residues that bind various heavy metals. This is Metallothionein-like protein 2B (MT2B) from Oryza sativa subsp. japonica (Rice).